A 195-amino-acid polypeptide reads, in one-letter code: Protease (195 aa).

The Peptidase A2 domain occupies 71–149; sequence ALMLVDTGAE…DKWQILGRDV (79 aa). Asp76 is an active-site residue.

The chain is Protease from Bos taurus (Bovine).